The chain runs to 229 residues: uncharacterized protein (229 aa).

To M.pneumoniae MPN_376 central region.

This is an uncharacterized protein from Mycoplasma pneumoniae (strain ATCC 29342 / M129 / Subtype 1) (Mycoplasmoides pneumoniae).